A 436-amino-acid polypeptide reads, in one-letter code: Trigger factor (436 aa).

Positions 163–248 (GDQVIIDFVG…VHSVQTKVLP (86 aa)) constitute a PPIase FKBP-type domain.

Belongs to the FKBP-type PPIase family. Tig subfamily.

The protein resides in the cytoplasm. The catalysed reaction is [protein]-peptidylproline (omega=180) = [protein]-peptidylproline (omega=0). In terms of biological role, involved in protein export. Acts as a chaperone by maintaining the newly synthesized protein in an open conformation. Functions as a peptidyl-prolyl cis-trans isomerase. The protein is Trigger factor of Hydrogenovibrio crunogenus (strain DSM 25203 / XCL-2) (Thiomicrospira crunogena).